The following is a 201-amino-acid chain: Holliday junction branch migration complex subunit RuvA (201 aa).

Positions methionine 1 to alanine 63 are domain I. Residues aspartate 64 to alanine 139 form a domain II region. The interval alanine 139–proline 143 is flexible linker. The tract at residues valine 144–arginine 201 is domain III.

The protein belongs to the RuvA family. In terms of assembly, homotetramer. Forms an RuvA(8)-RuvB(12)-Holliday junction (HJ) complex. HJ DNA is sandwiched between 2 RuvA tetramers; dsDNA enters through RuvA and exits via RuvB. An RuvB hexamer assembles on each DNA strand where it exits the tetramer. Each RuvB hexamer is contacted by two RuvA subunits (via domain III) on 2 adjacent RuvB subunits; this complex drives branch migration. In the full resolvosome a probable DNA-RuvA(4)-RuvB(12)-RuvC(2) complex forms which resolves the HJ.

The protein resides in the cytoplasm. Its function is as follows. The RuvA-RuvB-RuvC complex processes Holliday junction (HJ) DNA during genetic recombination and DNA repair, while the RuvA-RuvB complex plays an important role in the rescue of blocked DNA replication forks via replication fork reversal (RFR). RuvA specifically binds to HJ cruciform DNA, conferring on it an open structure. The RuvB hexamer acts as an ATP-dependent pump, pulling dsDNA into and through the RuvAB complex. HJ branch migration allows RuvC to scan DNA until it finds its consensus sequence, where it cleaves and resolves the cruciform DNA. The sequence is that of Holliday junction branch migration complex subunit RuvA from Streptomyces coelicolor (strain ATCC BAA-471 / A3(2) / M145).